A 238-amino-acid polypeptide reads, in one-letter code: uncharacterized protein (238 aa).

The N-terminal stretch at 1–20 (MNNVKLLIAGSAFFAMSAQA) is a signal peptide.

It to E.coli GltF.

This is an uncharacterized protein from Escherichia coli (strain K12).